We begin with the raw amino-acid sequence, 1891 residues long: Transcription initiation factor TFIID subunit 1 (1891 aa).

Disordered regions lie at residues 1 to 34 (MGPG…AGGG), 154 to 180 (KLMP…GVSE), and 197 to 224 (ASEK…SESK). The 435-residue stretch at 1–435 (MGPGWAGLLQ…VTQLHWEDDI (435 aa)) folds into the Protein kinase 1 domain. The span at 156–165 (MPPPPPPPGP) shows a compositional bias: pro residues. Low complexity predominate over residues 197–208 (ASEKVDFSSSSD). Position 328 is a phosphoserine; by autocatalysis (S328). The interval 535–556 (PDEKEEATSNSPSKENKKESSL) is disordered. Positions 538–997 (KEEATSNSPS…KIPNKPTQQK (460 aa)) are histone acetyltransferase (HAT). The residue at position 565 (K565) is an N6-acetyllysine. Residues K570 and K583 each participate in a glycyl lysine isopeptide (Lys-Gly) (interchain with G-Cter in SUMO2) cross-link. 3 disordered regions span residues 990-1009 (PNKP…KKTV), 1128-1148 (MLQN…QERK), and 1254-1278 (RLKR…MKER). Composition is skewed to basic and acidic residues over residues 995–1004 (QQKDDKEPQP), 1139–1148 (SREREEQERK), and 1254–1270 (RLKR…PPEK). The HMG box DNA-binding region spans 1216–1294 (VRIRTTKDEE…CGACGAIGHM (79 aa)). An interaction with ASF1A and ASF1B region spans residues 1363–1650 (VLKFPKQQLP…TAKEAALEEA (288 aa)). The short motif at 1372-1379 (PPKKKRRV) is the Nuclear localization signal element. Bromo domains follow at residues 1397 to 1505 (RRRT…LKEK) and 1519 to 1628 (LLDD…LTEY). Residues 1446 to 1891 (MDLQTLRENV…AGDTDLDSDE (446 aa)) enclose the Protein kinase 2 domain. Disordered stretches follow at residues 1651–1676 (ELES…NNTS) and 1690–1891 (SNLS…DSDE). The segment covering 1659 to 1668 (TPGPYTPQPP) has biased composition (pro residues). S1690 and S1693 each carry phosphoserine. Residues 1690-1708 (SNLSVLDIPSATSEKQLTQ) show a composition bias toward polar residues. Composition is skewed to acidic residues over residues 1711–1723 (GDGD…EEEG) and 1741–1756 (EGED…EEGD). Residues 1764–1778 (LSESGSDSDVESGSL) show a composition bias toward low complexity. A phosphoserine mark is found at S1799, S1802, and S1820. Polar residues predominate over residues 1830–1840 (KSNTQDTSFSS). Residues 1846-1855 (VSEEEEDEEE) show a composition bias toward acidic residues. S1847 carries the post-translational modification Phosphoserine. The segment covering 1858–1867 (SGPSVLSQVH) has biased composition (polar residues).

This sequence belongs to the TAF1 family. Component of the TFIID basal transcription factor complex, composed of TATA-box-binding protein TBP, and a number of TBP-associated factors (TAFs). TFIID consists of at least TBP, TAF1, TAF2, TAF3, TAF4, TAF5, TAF6, TAF7, TAF8, TAF9, TAF10, TAF11, TAF12 and TAF13. Interacts with TAF7; the interaction is direct. TAF1, when part of the TFIID complex, interacts with C-terminus of TP53. Part of a TFIID-containing RNA polymerase II pre-initiation complex that is composed of TBP and at least GTF2A1, GTF2A2, GTF2E1, GTF2E2, GTF2F1, GTF2H2, GTF2H3, GTF2H4, GTF2H5, GTF2B, TCEA1, ERCC2, ERCC3, TAF1, TAF2, TAF3, TAF4, TAF5, TAF6, TAF7, TAF8, TAF9, TAF10, TAF11, TAF12 and TAF13. Component of some MLL1/MLL complex, at least composed of the core components KMT2A/MLL1, ASH2L, HCFC1/HCF1, WDR5 and RBBP5, as well as the facultative components BACC1, CHD8, E2F6, HSP70, INO80C, KANSL1, LAS1L, MAX, MCRS1, MGA, KAT8/MOF, PELP1, PHF20, PRP31, RING2, RUVB1/TIP49A, RUVB2/TIP49B, SENP3, TAF1, TAF4, TAF6, TAF7, TAF9 and TEX10. RB1 interacts with the N-terminal domain of TAF1. Interacts with ASF1A and ASF1B. Interacts (via bromo domains) with acetylated lysine residues on the N-terminus of histone H1.4, H2A, H2B, H3 and H4 (in vitro). Mg(2+) serves as cofactor. In terms of processing, phosphorylated by casein kinase II in vitro.

It is found in the nucleus. It carries out the reaction L-seryl-[protein] + ATP = O-phospho-L-seryl-[protein] + ADP + H(+). The enzyme catalyses L-threonyl-[protein] + ATP = O-phospho-L-threonyl-[protein] + ADP + H(+). The catalysed reaction is L-lysyl-[protein] + acetyl-CoA = N(6)-acetyl-L-lysyl-[protein] + CoA + H(+). Autophosphorylates on Ser residues. Inhibited by retinoblastoma tumor suppressor protein, RB1. Binding to TAF1 or CIITA inhibits the histone acetyltransferase activity. Its function is as follows. The TFIID basal transcription factor complex plays a major role in the initiation of RNA polymerase II (Pol II)-dependent transcription. TFIID recognizes and binds promoters with or without a TATA box via its subunit TBP, a TATA-box-binding protein, and promotes assembly of the pre-initiation complex (PIC). The TFIID complex consists of TBP and TBP-associated factors (TAFs), including TAF1, TAF2, TAF3, TAF4, TAF5, TAF6, TAF7, TAF8, TAF9, TAF10, TAF11, TAF12 and TAF13. TAF1 is the largest component and core scaffold of the TFIID complex, involved in nucleating complex assembly. TAF1 forms a promoter DNA binding subcomplex of TFIID, together with TAF7 and TAF2. Contains novel N- and C-terminal Ser/Thr kinase domains which can autophosphorylate or transphosphorylate other transcription factors. Phosphorylates TP53 on 'Thr-55' which leads to MDM2-mediated degradation of TP53. Phosphorylates GTF2A1 and GTF2F1 on Ser residues. Possesses DNA-binding activity. Exhibits histone acetyltransferase activity towards histones H3 and H4. Essential for progression of the G1 phase of the cell cycle. This Mus musculus (Mouse) protein is Transcription initiation factor TFIID subunit 1.